The primary structure comprises 47 residues: Defensin Tk-AMP-D1.1 (47 aa).

Intrachain disulfides connect C3–C47, C14–C34, C20–C41, and C24–C43.

Its function is as follows. Plant defense peptide. The chain is Defensin Tk-AMP-D1.1 from Triticum kiharae (Wheat).